Reading from the N-terminus, the 166-residue chain is Disulfide bond formation protein B (166 aa).

The Cytoplasmic segment spans residues 1–11 (MCNKLFAGRRG). Residues 12 to 28 (YFLGFVASFGLVGLALF) traverse the membrane as a helical segment. Topologically, residues 29-46 (LQQKYNLEPCPLCISQRI) are periplasmic. Cysteine 38 and cysteine 41 are oxidised to a cystine. Residues 47–63 (AFMALGILFLLAALHNP) traverse the membrane as a helical segment. The Cytoplasmic segment spans residues 64–69 (GRVGRK). A helical transmembrane segment spans residues 70-87 (VYGLLHVIAAATGIGIAA). Residues 88–144 (RHIWIQANPDKVMAECGAGFDYIMETFPLKKALDLIFKGTGECSAIDWTLFGLTIPQ) lie on the Periplasmic side of the membrane. Cysteine 103 and cysteine 130 are oxidised to a cystine. The chain crosses the membrane as a helical span at residues 145–163 (LSLIAFVGLGLFAVLLAFH). The Cytoplasmic portion of the chain corresponds to 164-166 (KKA).

It belongs to the DsbB family.

It localises to the cell inner membrane. Functionally, required for disulfide bond formation in some periplasmic proteins. Acts by oxidizing the DsbA protein. This Methylobacillus flagellatus (strain ATCC 51484 / DSM 6875 / VKM B-1610 / KT) protein is Disulfide bond formation protein B.